We begin with the raw amino-acid sequence, 462 residues long: Argininosuccinate lyase (462 aa).

Belongs to the lyase 1 family. Argininosuccinate lyase subfamily.

It localises to the cytoplasm. The catalysed reaction is 2-(N(omega)-L-arginino)succinate = fumarate + L-arginine. Its pathway is amino-acid biosynthesis; L-arginine biosynthesis; L-arginine from L-ornithine and carbamoyl phosphate: step 3/3. The sequence is that of Argininosuccinate lyase from Leuconostoc citreum (strain KM20).